The chain runs to 339 residues: Protein-arginine kinase (339 aa).

Positions 14–242 (IVINSNISLS…LNVISEEKKF (229 aa)) constitute a Phosphagen kinase C-terminal domain. ATP-binding positions include 17–21 (NSNIS), 164–168 (RASVN), and 195–200 (KGLYEE).

This sequence belongs to the ATP:guanido phosphotransferase family.

The enzyme catalyses L-arginyl-[protein] + ATP = N(omega)-phospho-L-arginyl-[protein] + ADP + H(+). Functionally, catalyzes the specific phosphorylation of arginine residues in proteins. This is Protein-arginine kinase from Clostridium botulinum (strain Eklund 17B / Type B).